A 109-amino-acid chain; its full sequence is Con-Ins K2 (109 aa).

A signal peptide spans 1 to 24; that stretch reads MTTSSYFLLVALGLLLYVCQSSFG. The propeptide occupies 25 to 29; that stretch reads NPHTR. Intrachain disulfides connect Cys41–Cys90, Cys53–Cys103, and Cys89–Cys94. 4-carboxyglutamate is present on Glu44. Positions 57 to 83 are cleaved as a propeptide — c peptide; sequence RKRRGFPSMLKARAKRNEAFLLQRDGR.

This sequence belongs to the insulin family. As to quaternary structure, heterodimer of A and B chains; disulfide-linked. Expressed by the venom gland.

It localises to the secreted. Its function is as follows. This venom insulin, from a fish-hunting cone snail, facilitates prey capture by rapidly inducing hypoglycemic shock. It is one of the smallest known insulin found in nature and lacks the C-terminal segment of the B chain that, in human insulin, mediates engagement of the insulin receptor (INSR) and assembly of the hormone's hexameric storage form. Despite lacking this segment, it both binds and activates human insulin receptor (long isoform (HIR-B)) with a moderate potency (EC(50)=373.2 nM). In vivo, intraperitoneal injection of this peptide into zebrafish lowers blood glucose with a lower potency than human insulin. In addition, when applied to water, this peptide reduces overall locomotor activity of zebrafish larvae, observed as a significant decrease in the percentage of time spent swimming and movement frequency. When tested on a mouse model of diabetes, this insulin also lowers blood glucose with a 20-fold lower potency than human insulin. This is Con-Ins K2 from Conus kinoshitai (Kinoshita's cone).